The chain runs to 409 residues: Divalent metal cation transporter MntH (409 aa).

The next 11 membrane-spanning stretches (helical) occupy residues 19-39, 46-66, 98-118, 122-142, 155-175, 196-216, 241-261, 290-310, 320-340, 348-368, and 388-408; these read LSLM…GNFA, ATFG…AMLV, WVQA…GAAI, LLFG…TFLI, LVIG…LIFS, AVFL…IYLH, IAMT…AAAF, VFGL…TLAG, FYIP…IVIL, ILVM…VPLL, and ILGK…LISL.

This sequence belongs to the NRAMP family.

It is found in the cell inner membrane. Functionally, h(+)-stimulated, divalent metal cation uptake system. The sequence is that of Divalent metal cation transporter MntH from Yersinia pseudotuberculosis serotype O:1b (strain IP 31758).